The following is a 255-amino-acid chain: PABIR family member 2 (255 aa).

Residues 1 to 24 (MAQEKMDLDFEADTSEGATLRRSN) are disordered. N-acetylalanine is present on alanine 2. Phosphoserine is present on residues serine 25, serine 33, serine 50, and serine 58. Phosphothreonine is present on threonine 112. Phosphoserine occurs at positions 115 and 119. Position 122 is an omega-N-methylarginine (arginine 122). Serine 145 carries the phosphoserine modification. Disordered stretches follow at residues 169-196 (LGPLKRKGEMEMESQPKRPFQGTTSMLS) and 219-238 (SGLSSDSLATGSAPAESPVA). Residues 174 to 184 (RKGEMEMESQP) are compositionally biased toward basic and acidic residues.

It belongs to the FAM122 family.

This is PABIR family member 2 from Mus musculus (Mouse).